Reading from the N-terminus, the 274-residue chain is Penicillin-insensitive murein endopeptidase (274 aa).

The first 19 residues, 1 to 19 (MNKTAIALLALLASSASLA), serve as a signal peptide directing secretion. 3 disulfides stabilise this stretch: Cys44-Cys265, Cys187-Cys235, and Cys216-Cys223. Zn(2+)-binding residues include His110, His113, Asp120, Asp147, His150, and His211. Residues 227-274 (PLPPPGDGCGAELQSWFEPPKPGTTKPEKKTPPPLPPSCQALLDEHVI) are disordered.

This sequence belongs to the peptidase M74 family. As to quaternary structure, dimer. The cofactor is Zn(2+).

It localises to the periplasm. In terms of biological role, murein endopeptidase that cleaves the D-alanyl-meso-2,6-diamino-pimelyl amide bond that connects peptidoglycan strands. Likely plays a role in the removal of murein from the sacculus. In Escherichia coli O9:H4 (strain HS), this protein is Penicillin-insensitive murein endopeptidase.